The sequence spans 256 residues: Phosphatidylglycerol--prolipoprotein diacylglyceryl transferase (256 aa).

3 helical membrane passes run 19–39 (VHWY…LGYW), 56–76 (LIFY…MLFY), and 91–111 (IWEG…AAWL). Position 139 (R139) interacts with a 1,2-diacyl-sn-glycero-3-phospho-(1'-sn-glycerol). The chain crosses the membrane as a helical span at residues 231–251 (FGWLTMGQVLSIPMLLIGIWL).

Belongs to the Lgt family.

It is found in the cell inner membrane. The catalysed reaction is L-cysteinyl-[prolipoprotein] + a 1,2-diacyl-sn-glycero-3-phospho-(1'-sn-glycerol) = an S-1,2-diacyl-sn-glyceryl-L-cysteinyl-[prolipoprotein] + sn-glycerol 1-phosphate + H(+). Its pathway is protein modification; lipoprotein biosynthesis (diacylglyceryl transfer). In terms of biological role, catalyzes the transfer of the diacylglyceryl group from phosphatidylglycerol to the sulfhydryl group of the N-terminal cysteine of a prolipoprotein, the first step in the formation of mature lipoproteins. The polypeptide is Phosphatidylglycerol--prolipoprotein diacylglyceryl transferase (Legionella pneumophila (strain Lens)).